A 136-amino-acid polypeptide reads, in one-letter code: Histone H3.3 (136 aa).

The tract at residues 1-43 (MARTKQTARKSTGGKAPRKQLATKAARKSAPTTGGVKKPHRYR) is disordered. At Lys-5 the chain carries N6-methylated lysine. Lys-10 carries the post-translational modification N6-acetyllysine; alternate. Lys-10 carries the N6-methylated lysine; alternate modification. The residue at position 11 (Ser-11) is a Phosphoserine. The residue at position 12 (Thr-12) is a Phosphothreonine. At Lys-15 the chain carries N6-acetyllysine. An N6-acetyllysine; alternate mark is found at Lys-19 and Lys-24. 2 positions are modified to N6-methylated lysine; alternate: Lys-19 and Lys-24. An N6-methylated lysine modification is found at Lys-28. Position 29 is a phosphoserine (Ser-29). Lys-37 is subject to N6-methylated lysine.

Belongs to the histone H3 family. In terms of assembly, the nucleosome is a histone octamer containing two molecules each of H2A, H2B, H3 and H4 assembled in one H3-H4 heterotetramer and two H2A-H2B heterodimers. The octamer wraps approximately 147 bp of DNA. In terms of processing, acetylation is generally linked to gene activation. Can be acetylated to form H3K9ac, H3K14ac, H3K18ac and H3K23ac. H3K9ac could compete with H3K9me and prevent gene silencing. H3K9ac is restricted to euchromatin. Methylated to form mainly H3K4me, H3K9me, H3K18me, H3K23me, H3K27me and H3K36me. H3K4me1/2/3, H3K9me3, H3K27me3 and H3K36me1/2/3 are typical marks for euchromatin, whereas heterochromatic chromocenters are enriched in H3K9me1/2 and H3K27me1/2. H2BK143ub1 is probably prerequisite for H3K4me. Post-translationally, can be phosphorylated to form H3S10ph, H3T11ph and H3S28ph.

The protein localises to the nucleus. It is found in the chromosome. In terms of biological role, variant histone H3 which replaces conventional H3 in a wide range of nucleosomes in active genes. Constitutes the predominant form of histone H3 in non-dividing cells and is incorporated into chromatin independently of DNA synthesis. Deposited at sites of nucleosomal displacement throughout transcribed genes, suggesting that it represents an epigenetic imprint of transcriptionally active chromatin. Nucleosomes wrap and compact DNA into chromatin, limiting DNA accessibility to the cellular machineries which require DNA as a template. Histones thereby play a central role in transcription regulation, DNA repair, DNA replication and chromosomal stability. DNA accessibility is regulated via a complex set of post-translational modifications of histones, also called histone code, and nucleosome remodeling. This is Histone H3.3 (HIS3) from Gossypium hirsutum (Upland cotton).